A 123-amino-acid chain; its full sequence is UPF0102 protein SPO0400 (123 aa).

The protein belongs to the UPF0102 family.

The protein is UPF0102 protein SPO0400 of Ruegeria pomeroyi (strain ATCC 700808 / DSM 15171 / DSS-3) (Silicibacter pomeroyi).